Consider the following 346-residue polypeptide: MLELHRVSKSFNGRTVLSDIHLTLENSRRTAIVGPSGSGKTTLLRLIAGFETPDTGVITLNGQTLCDNGFSVPAHQRRIGYVPQDGALFPHLCIADNIAFGLKGSKAEKQKRVDELMALVSLPTHLQKHSPHEISGGQQQRVALARALAQRPALMLLDEPFSALDTGLRAATRKAVMDVLQQANVASILVTHDQGEALSFADRVVVMREGQLSQSGSPWALYHQPNSEDIATFLGETLILNAQIDGGKADCLLGRIAVDRPTANGRVRIMLRPEQITIQDTEITSTAHMRATIRNVEFSGFVSTLTLRIHNAEADVIELKTVSHAAFIVGQQVSLSVNGAAHVFSQ.

The ABC transporter domain maps to 2–234 (LELHRVSKSF…PNSEDIATFL (233 aa)). 34–41 (GPSGSGKT) is a binding site for ATP.

Belongs to the ABC transporter superfamily. Fe(3+) ion importer (TC 3.A.1.10) family. As to quaternary structure, the complex is composed of two ATP-binding proteins (FbpC), two transmembrane proteins (FbpB) and a solute-binding protein (FbpA).

The protein localises to the cell inner membrane. It carries out the reaction Fe(3+)(out) + ATP + H2O = Fe(3+)(in) + ADP + phosphate + H(+). Part of the ABC transporter complex FbpABC involved in Fe(3+) ions import. Responsible for energy coupling to the transport system. The protein is Fe(3+) ions import ATP-binding protein FbpC 2 of Pectobacterium atrosepticum (strain SCRI 1043 / ATCC BAA-672) (Erwinia carotovora subsp. atroseptica).